Consider the following 122-residue polypeptide: Holo-[acyl-carrier-protein] synthase (122 aa).

Mg(2+) contacts are provided by Asp-9 and Glu-58.

Belongs to the P-Pant transferase superfamily. AcpS family. Requires Mg(2+) as cofactor.

It localises to the cytoplasm. The catalysed reaction is apo-[ACP] + CoA = holo-[ACP] + adenosine 3',5'-bisphosphate + H(+). In terms of biological role, transfers the 4'-phosphopantetheine moiety from coenzyme A to a Ser of acyl-carrier-protein. This is Holo-[acyl-carrier-protein] synthase from Chlamydia pneumoniae (Chlamydophila pneumoniae).